Consider the following 437-residue polypeptide: Enolase (437 aa).

Gln163 provides a ligand contact to (2R)-2-phosphoglycerate. The active-site Proton donor is the Glu205. The Mg(2+) site is built by Asp242, Glu285, and Asp312. Lys337, Arg366, Ser367, and Lys388 together coordinate (2R)-2-phosphoglycerate. The active-site Proton acceptor is the Lys337.

It belongs to the enolase family. Mg(2+) serves as cofactor.

Its subcellular location is the cytoplasm. The protein resides in the secreted. It is found in the cell surface. The catalysed reaction is (2R)-2-phosphoglycerate = phosphoenolpyruvate + H2O. It participates in carbohydrate degradation; glycolysis; pyruvate from D-glyceraldehyde 3-phosphate: step 4/5. Functionally, catalyzes the reversible conversion of 2-phosphoglycerate (2-PG) into phosphoenolpyruvate (PEP). It is essential for the degradation of carbohydrates via glycolysis. In Nitratidesulfovibrio vulgaris (strain DP4) (Desulfovibrio vulgaris), this protein is Enolase.